The following is a 940-amino-acid chain: Isoleucine--tRNA ligase (940 aa).

Positions 58–68 (PYANGSIHIGH) match the 'HIGH' region motif. L-isoleucyl-5'-AMP is bound at residue Glu564. The 'KMSKS' region signature appears at 605-609 (KMSKS). Lys608 is a binding site for ATP. Cys903, Cys906, Cys923, and Cys926 together coordinate Zn(2+).

It belongs to the class-I aminoacyl-tRNA synthetase family. IleS type 1 subfamily. In terms of assembly, monomer. Zn(2+) is required as a cofactor.

Its subcellular location is the cytoplasm. It carries out the reaction tRNA(Ile) + L-isoleucine + ATP = L-isoleucyl-tRNA(Ile) + AMP + diphosphate. Catalyzes the attachment of isoleucine to tRNA(Ile). As IleRS can inadvertently accommodate and process structurally similar amino acids such as valine, to avoid such errors it has two additional distinct tRNA(Ile)-dependent editing activities. One activity is designated as 'pretransfer' editing and involves the hydrolysis of activated Val-AMP. The other activity is designated 'posttransfer' editing and involves deacylation of mischarged Val-tRNA(Ile). This Shewanella putrefaciens (strain CN-32 / ATCC BAA-453) protein is Isoleucine--tRNA ligase.